A 456-amino-acid polypeptide reads, in one-letter code: UDP-N-acetylglucosamine 1-carboxyvinyltransferase (456 aa).

34–35 lines the phosphoenolpyruvate pocket; sequence KN. Arg104 provides a ligand contact to UDP-N-acetyl-alpha-D-glucosamine. The Proton donor role is filled by Cys128. 2-(S-cysteinyl)pyruvic acid O-phosphothioketal is present on Cys128. UDP-N-acetyl-alpha-D-glucosamine contacts are provided by Asp319 and Ile341.

Belongs to the EPSP synthase family. MurA subfamily.

The protein resides in the cytoplasm. The catalysed reaction is phosphoenolpyruvate + UDP-N-acetyl-alpha-D-glucosamine = UDP-N-acetyl-3-O-(1-carboxyvinyl)-alpha-D-glucosamine + phosphate. It functions in the pathway cell wall biogenesis; peptidoglycan biosynthesis. In terms of biological role, cell wall formation. Adds enolpyruvyl to UDP-N-acetylglucosamine. The protein is UDP-N-acetylglucosamine 1-carboxyvinyltransferase of Prochlorococcus marinus (strain MIT 9312).